Consider the following 414-residue polypeptide: Histidine--tRNA ligase (414 aa).

The protein belongs to the class-II aminoacyl-tRNA synthetase family. In terms of assembly, homodimer.

Its subcellular location is the cytoplasm. The catalysed reaction is tRNA(His) + L-histidine + ATP = L-histidyl-tRNA(His) + AMP + diphosphate + H(+). The polypeptide is Histidine--tRNA ligase (Rickettsia conorii (strain ATCC VR-613 / Malish 7)).